The primary structure comprises 158 residues: Large ribosomal subunit protein uL15 (158 aa).

The segment covering 1–13 (MKLNEIKDNEGST) has biased composition (basic and acidic residues). Residues 1–44 (MKLNEIKDNEGSTHSRKRLGRGIGSGSGKTAGRGVKGQKSRSGV) form a disordered region. Residues 21-35 (RGIGSGSGKTAGRGV) show a composition bias toward gly residues.

This sequence belongs to the universal ribosomal protein uL15 family. In terms of assembly, part of the 50S ribosomal subunit.

Its function is as follows. Binds to the 23S rRNA. The protein is Large ribosomal subunit protein uL15 of Rhizobium etli (strain ATCC 51251 / DSM 11541 / JCM 21823 / NBRC 15573 / CFN 42).